Here is a 637-residue protein sequence, read N- to C-terminus: 1-deoxy-D-xylulose-5-phosphate synthase (637 aa).

Residues His71 and 112 to 114 each bind thiamine diphosphate; that span reads SHA. Asp144 contacts Mg(2+). Thiamine diphosphate-binding positions include 145–146, Asn173, Tyr284, and Glu365; that span reads GA. Asn173 is a binding site for Mg(2+).

This sequence belongs to the transketolase family. DXPS subfamily. Homodimer. It depends on Mg(2+) as a cofactor. Thiamine diphosphate is required as a cofactor.

It carries out the reaction D-glyceraldehyde 3-phosphate + pyruvate + H(+) = 1-deoxy-D-xylulose 5-phosphate + CO2. It participates in metabolic intermediate biosynthesis; 1-deoxy-D-xylulose 5-phosphate biosynthesis; 1-deoxy-D-xylulose 5-phosphate from D-glyceraldehyde 3-phosphate and pyruvate: step 1/1. In terms of biological role, catalyzes the acyloin condensation reaction between C atoms 2 and 3 of pyruvate and glyceraldehyde 3-phosphate to yield 1-deoxy-D-xylulose-5-phosphate (DXP). The chain is 1-deoxy-D-xylulose-5-phosphate synthase from Mycolicibacterium vanbaalenii (strain DSM 7251 / JCM 13017 / BCRC 16820 / KCTC 9966 / NRRL B-24157 / PYR-1) (Mycobacterium vanbaalenii).